Here is a 391-residue protein sequence, read N- to C-terminus: uncharacterized protein (391 aa).

The region spanning A85–G314 is the OBG-type G domain. Residues G91–S98, D137–I141, and N267–D270 contribute to the GTP site. Positions G314–I389 constitute a TGS domain.

The protein belongs to the TRAFAC class OBG-HflX-like GTPase superfamily. OBG GTPase family.

This is an uncharacterized protein from Methanocaldococcus jannaschii (strain ATCC 43067 / DSM 2661 / JAL-1 / JCM 10045 / NBRC 100440) (Methanococcus jannaschii).